Reading from the N-terminus, the 297-residue chain is 3-mercaptopyruvate sulfurtransferase (297 aa).

Alanine 2 is modified (N-acetylalanine). The region spanning 25–144 (SSQPLKLLDA…WLNQNLPISS (120 aa)) is the Rhodanese 1 domain. Phosphoserine is present on serine 35. An N6-acetyllysine; alternate modification is found at lysine 40. The residue at position 40 (lysine 40) is an N6-succinyllysine; alternate. Residues 145-160 (GKSHSEPAEFSAQLDP) form a hinge region. N6-succinyllysine is present on residues lysine 146 and lysine 164. In terms of domain architecture, Rhodanese 2 spans 174–288 (DARRFQVVDA…WYMRAQPEHI (115 aa)). Arginine 188 lines the substrate pocket. The active-site Cysteine persulfide intermediate is cysteine 248.

In terms of assembly, monomer (active form). Homodimer; disulfide-linked (inactive form). As to expression, expressed in the brain and retina. In the retina, localized to the inner and outer plexiform layer, the inner and outer nuclear layer and the outer segments of photoreceptors. In the brain, localized to neurons of mitral cell layers, glomerular, and external plexiform layers in the olfactory bulb. Also found in Purkinje cell stomata and proximal dendrites. In the spinal cord, localized to large neurons. In the cerebral cortex, localized to pyramidial neurons in layers II/III and V, and in layers I-VI of neocortical areas. In the hippocampus, found in CA1 and CA3 pyramidal cells.

The protein resides in the cytoplasm. It localises to the mitochondrion. Its subcellular location is the synapse. The protein localises to the synaptosome. It catalyses the reaction 2-oxo-3-sulfanylpropanoate + [thioredoxin]-dithiol = [thioredoxin]-disulfide + hydrogen sulfide + pyruvate + H(+). Its activity is regulated as follows. By oxidative stress, and thioredoxin. Under oxidative stress conditions, the catalytic cysteine site is converted to a sulfenate which inhibits the MPST enzyme activity. Reduced thioredoxin cleaves an intersubunit disulfide bond to turn on the redox switch and reactivate the enzyme. Inhibited by different oxidants, hydrogen peroxide and tetrathionate. Its function is as follows. Transfer of a sulfur ion to cyanide or to other thiol compounds. Also has weak rhodanese activity. Detoxifies cyanide and is required for thiosulfate biosynthesis. Acts as an antioxidant. In combination with cysteine aminotransferase (CAT), contributes to the catabolism of cysteine and is an important producer of hydrogen sulfide in the brain, retina and vascular endothelial cells. Hydrogen sulfide H(2)S is an important synaptic modulator, signaling molecule, smooth muscle contractor and neuroprotectant. Its production by the 3MST/CAT pathway is regulated by calcium ions. This Mus musculus (Mouse) protein is 3-mercaptopyruvate sulfurtransferase (Mpst).